The sequence spans 406 residues: Prisilkin-39 (406 aa).

The first 19 residues, 1-19 (MKGFLTLLLVCAILSTGYC), serve as a signal peptide directing secretion. Helical transmembrane passes span 26–48 (ALTG…GAGA) and 58–80 (VGVG…YGGY). Residues 78–197 (GGYSGYGYGY…YSGYSYGYPT (120 aa)) form a 10 X 12 AA tandem repeat of G-G-Y-[SG]-G-Y-[GS]-Y-G-Y-P-[AT] region.

In terms of tissue distribution, expression is confined to the prism and organic layers of the shell with no expression detected in the nacreous shell layer. Also expressed in the mantle edge, extrapallial fluid, hemolymph and, to a lesser extent, in the viscus (at protein level). In the mantle, localizes to inner epithelial cells of the outer fold and the outer epithelial cells of the middle fold at the bottom of the periostracal groove.

Its subcellular location is the membrane. Functionally, binds chitin and may serve as a framework constituent participating in shell formation. Inhibits aragonite precipitation and may regulate aragonite growth during shell layer formation. Does not affect calcite crystallization. This chain is Prisilkin-39, found in Pinctada fucata (Akoya pearl oyster).